The chain runs to 150 residues: Toxin coregulated pilus biosynthesis protein Q (150 aa).

In terms of biological role, involved in TCP pilus biogenesis. In Vibrio cholerae serotype O1 (strain ATCC 39315 / El Tor Inaba N16961), this protein is Toxin coregulated pilus biosynthesis protein Q (tcpQ).